Consider the following 23-residue polypeptide: Gastrin-releasing peptide (23 aa).

The residue at position 23 (Met23) is a Methionine amide.

Belongs to the bombesin/neuromedin-B/ranatensin family.

It is found in the secreted. The protein localises to the cytoplasmic vesicle. It localises to the secretory vesicle lumen. Stimulates the release of gastrin and other gastrointestinal hormones. The polypeptide is Gastrin-releasing peptide (grp) (Oncorhynchus mykiss (Rainbow trout)).